Reading from the N-terminus, the 216-residue chain is Uracil phosphoribosyltransferase (216 aa).

Residues Arg-84, Arg-109, and 137–145 (DPMLATGNT) contribute to the 5-phospho-alpha-D-ribose 1-diphosphate site. Residues Ile-202 and 207-209 (GDA) contribute to the uracil site. Asp-208 serves as a coordination point for 5-phospho-alpha-D-ribose 1-diphosphate.

It belongs to the UPRTase family. Mg(2+) serves as cofactor.

It catalyses the reaction UMP + diphosphate = 5-phospho-alpha-D-ribose 1-diphosphate + uracil. Its pathway is pyrimidine metabolism; UMP biosynthesis via salvage pathway; UMP from uracil: step 1/1. With respect to regulation, allosterically activated by GTP. In terms of biological role, catalyzes the conversion of uracil and 5-phospho-alpha-D-ribose 1-diphosphate (PRPP) to UMP and diphosphate. This is Uracil phosphoribosyltransferase from Synechocystis sp. (strain ATCC 27184 / PCC 6803 / Kazusa).